Here is a 93-residue protein sequence, read N- to C-terminus: HIG1 domain family member 1A, mitochondrial (93 aa).

An N-acetylserine modification is found at S2. The HIG1 domain maps to 2–93; the sequence is STNTDLSLSS…YQEFWAKRKP (92 aa). Position 8 is a phosphoserine (S8). The next 2 helical transmembrane spans lie at 28–48 and 69–89; these read PFVP…LYKL and GFVV…EFWA. Residues 90-93 are Mitochondrial matrix-facing; that stretch reads KRKP.

Associates with cytochrome c oxidase (COX, complex IV); proposed complex component. Also associates with respiratory chain supercomplexes. In terms of tissue distribution, expressed in brain and spinal cord.

The protein localises to the mitochondrion membrane. The protein resides in the mitochondrion inner membrane. Its function is as follows. Proposed subunit of cytochrome c oxidase (COX, complex IV), which is the terminal component of the mitochondrial respiratory chain that catalyzes the reduction of oxygen to water. May play a role in the assembly of respiratory supercomplexes. The sequence is that of HIG1 domain family member 1A, mitochondrial (Higd1a) from Rattus norvegicus (Rat).